The primary structure comprises 176 residues: ATP-dependent protease subunit HslV (176 aa).

Residue T2 is part of the active site. Positions 157, 160, and 163 each coordinate Na(+).

The protein belongs to the peptidase T1B family. HslV subfamily. As to quaternary structure, a double ring-shaped homohexamer of HslV is capped on each side by a ring-shaped HslU homohexamer. The assembly of the HslU/HslV complex is dependent on binding of ATP.

The protein localises to the cytoplasm. The catalysed reaction is ATP-dependent cleavage of peptide bonds with broad specificity.. Allosterically activated by HslU binding. Protease subunit of a proteasome-like degradation complex believed to be a general protein degrading machinery. This is ATP-dependent protease subunit HslV from Pseudomonas syringae pv. tomato (strain ATCC BAA-871 / DC3000).